A 159-amino-acid polypeptide reads, in one-letter code: MPSFDVVSELDKHEVTNAVDNAIKELDRRYDLKGKGTFEFKELTVTLTAEADFQLEAMIEILKLALVKRKIDAKCLEIKDAYASGKLMKQEVTLREGIDKELAKKIVAHIKEAKLKVQAAIQGEQVRVTGKKRDDLQEAIAALRAYDSGMPLQFNNFRD.

Belongs to the YajQ family.

In terms of biological role, nucleotide-binding protein. This chain is Nucleotide-binding protein PSPPH_4093, found in Pseudomonas savastanoi pv. phaseolicola (strain 1448A / Race 6) (Pseudomonas syringae pv. phaseolicola (strain 1448A / Race 6)).